The sequence spans 457 residues: uncharacterized protein (457 aa).

This is an uncharacterized protein from Synechocystis sp. (strain ATCC 27184 / PCC 6803 / Kazusa).